The primary structure comprises 146 residues: Large ribosomal subunit protein uL24z (146 aa).

Disordered stretches follow at residues 1–26 and 121–146; these read MKYNPRVTSSRRKNRKAHFTASSSER and KAKGRAAADKEKGTKFTSEDVMQNVD. Residues 9–18 are compositionally biased toward basic residues; that stretch reads SSRRKNRKAH. Over residues 121–138 the composition is skewed to basic and acidic residues; sequence KAKGRAAADKEKGTKFTS.

The protein belongs to the universal ribosomal protein uL24 family.

The chain is Large ribosomal subunit protein uL24z (RPL26A) from Arabidopsis thaliana (Mouse-ear cress).